A 201-amino-acid polypeptide reads, in one-letter code: MPDLALEFEIGGIVCGIDEVGRGPLAGPVVAAAVILDPARLPKTLLERLDDSKKLSKRNREELAELVPATAILGFGEASVEEIDRINILQATFLAMRRAYDALGRECAHALVDGNRPPGLPCPVRCVVGGDGISLSIAAASVVAKVRRDAMMADLARAHPEFGWERNAGYGTAEHLDALKRLGPTPHHRRSFAPVAQYMLF.

One can recognise an RNase H type-2 domain in the interval 12–201 (GIVCGIDEVG…FAPVAQYMLF (190 aa)). Residues aspartate 18, glutamate 19, and aspartate 113 each contribute to the a divalent metal cation site.

Belongs to the RNase HII family. It depends on Mn(2+) as a cofactor. The cofactor is Mg(2+).

The protein localises to the cytoplasm. The catalysed reaction is Endonucleolytic cleavage to 5'-phosphomonoester.. Endonuclease that specifically degrades the RNA of RNA-DNA hybrids. The polypeptide is Ribonuclease HII (rnhB) (Paramagnetospirillum magneticum (strain ATCC 700264 / AMB-1) (Magnetospirillum magneticum)).